Reading from the N-terminus, the 136-residue chain is Small ribosomal subunit protein eS17B (136 aa).

Belongs to the eukaryotic ribosomal protein eS17 family. As to quaternary structure, component of the small ribosomal subunit (SSU). Mature yeast ribosomes consist of a small (40S) and a large (60S) subunit. The 40S small subunit contains 1 molecule of ribosomal RNA (18S rRNA) and 33 different proteins (encoded by 57 genes). The large 60S subunit contains 3 rRNA molecules (25S, 5.8S and 5S rRNA) and 46 different proteins (encoded by 81 genes).

It is found in the cytoplasm. In terms of biological role, component of the ribosome, a large ribonucleoprotein complex responsible for the synthesis of proteins in the cell. The small ribosomal subunit (SSU) binds messenger RNAs (mRNAs) and translates the encoded message by selecting cognate aminoacyl-transfer RNA (tRNA) molecules. The large subunit (LSU) contains the ribosomal catalytic site termed the peptidyl transferase center (PTC), which catalyzes the formation of peptide bonds, thereby polymerizing the amino acids delivered by tRNAs into a polypeptide chain. The nascent polypeptides leave the ribosome through a tunnel in the LSU and interact with protein factors that function in enzymatic processing, targeting, and the membrane insertion of nascent chains at the exit of the ribosomal tunnel. The chain is Small ribosomal subunit protein eS17B from Saccharomyces cerevisiae (strain ATCC 204508 / S288c) (Baker's yeast).